The following is a 388-amino-acid chain: L-lactate dehydrogenase (388 aa).

Residues 1 to 380 (MIISAASDYR…SADALSRVTR (380 aa)) enclose the FMN hydroxy acid dehydrogenase domain. Tyr-24 provides a ligand contact to substrate. FMN-binding residues include Ser-106 and Gln-127. A substrate-binding site is contributed by Tyr-129. Position 155 (Thr-155) interacts with FMN. Arg-164 lines the substrate pocket. Lys-251 contributes to the FMN binding site. His-275 acts as the Proton acceptor in catalysis. Position 278 (Arg-278) interacts with substrate. 306–330 (DSGIRSGLDVVRMLALGADAVLLGR) contacts FMN.

This sequence belongs to the FMN-dependent alpha-hydroxy acid dehydrogenase family. Requires FMN as cofactor.

Its subcellular location is the cell inner membrane. It catalyses the reaction (S)-lactate + A = pyruvate + AH2. Its function is as follows. Catalyzes the conversion of L-lactate to pyruvate. Is coupled to the respiratory chain. This Xanthomonas axonopodis pv. citri (strain 306) protein is L-lactate dehydrogenase.